The sequence spans 488 residues: Glutamate--tRNA ligase (488 aa).

The short motif at 8 to 18 (PSPTGPLHIGG) is the 'HIGH' region element. Zn(2+) contacts are provided by C105, C107, C132, and H134. The 'KMSKS' region motif lies at 249 to 253 (KMSKR). K252 contributes to the ATP binding site.

The protein belongs to the class-I aminoacyl-tRNA synthetase family. Glutamate--tRNA ligase type 1 subfamily. In terms of assembly, monomer. Zn(2+) serves as cofactor.

The protein resides in the cytoplasm. It carries out the reaction tRNA(Glu) + L-glutamate + ATP = L-glutamyl-tRNA(Glu) + AMP + diphosphate. In terms of biological role, catalyzes the attachment of glutamate to tRNA(Glu) in a two-step reaction: glutamate is first activated by ATP to form Glu-AMP and then transferred to the acceptor end of tRNA(Glu). In Desulfitobacterium hafniense (strain Y51), this protein is Glutamate--tRNA ligase.